Consider the following 690-residue polypeptide: UvrABC system protein C (690 aa).

Residues 1 to 60 are disordered; the sequence is MTTDSSDPAKPAGPGQPPGSGADTRPGGLATGQDVDPATIETDEDDEARLPDVPDEPTDA. Residues 41 to 58 are compositionally biased toward acidic residues; that stretch reads ETDEDDEARLPDVPDEPT. The region spanning 82-160 is the GIY-YIG domain; that stretch reads TSPGVYRMMN…IKQLRPRFNV (79 aa). The UVR domain occupies 270 to 305; that stretch reads RAVKEELAREMEKASGDLAFERAALYRDRLAALSAI.

This sequence belongs to the UvrC family. Interacts with UvrB in an incision complex.

The protein resides in the cytoplasm. The UvrABC repair system catalyzes the recognition and processing of DNA lesions. UvrC both incises the 5' and 3' sides of the lesion. The N-terminal half is responsible for the 3' incision and the C-terminal half is responsible for the 5' incision. This is UvrABC system protein C from Nitrobacter hamburgensis (strain DSM 10229 / NCIMB 13809 / X14).